We begin with the raw amino-acid sequence, 798 residues long: Peroxisome proliferator-activated receptor gamma coactivator 1-alpha (798 aa).

Lys79 bears the N6-acetyllysine mark. Residues 100–140 (PVDEDGLPSFDALTDGDVTTDNEASPSSMPDGTPPPQEAEE) are disordered. Positions 116 to 129 (DVTTDNEASPSSMP) are enriched in polar residues. The LXXLL motif signature appears at 144-148 (LKKLL). Lys146 is subject to N6-acetyllysine. Thr178 is subject to Phosphothreonine; by AMPK. Position 184 is an N6-acetyllysine (Lys184). The segment at 213 to 277 (YLTTNDDPPH…NDPKGSPFEN (65 aa)) is disordered. A compositionally biased stretch (basic and acidic residues) spans 219–237 (DPPHTKPTENRNSSRDKCT). N6-acetyllysine occurs at positions 254, 271, 278, and 321. Residues 290-351 (GTAGLTPPTT…NNSTKKGPEQ (62 aa)) are disordered. The tract at residues 293 to 339 (GLTPPTTPPHKANQDNPFRASPKLKSSCKTVVPPPSKKPRYSESSGT) is interaction with PPARG. Polar residues predominate over residues 334–346 (SESSGTQGNNSTK). 4 positions are modified to N6-acetyllysine: Lys347, Lys413, Lys442, and Lys451. Residues 350–798 (EQSELYAQLS…LKEAQRSLRR (449 aa)) form a mediates interaction with RNF34 region. Ser539 is modified (phosphoserine; by AMPK). 3 disordered regions span residues 542 to 599 (SFNS…SSRS), 613 to 639 (HRNS…SYEE), and 650 to 669 (YRRE…ERQR). Residues 563-578 (QRMRSRSRSFSRHRSC) are compositionally biased toward basic residues. The span at 579–599 (SRSPYSRSRSRSPGSRSSSRS) shows a compositional bias: low complexity. The span at 622–631 (SRSRSPYSRR) shows a compositional bias: basic residues. Residues 677–753 (RVIYVGKIRP…TDFELYFCGR (77 aa)) form the RRM domain. N6-acetyllysine is present on residues Lys758 and Lys779.

In terms of assembly, homooligomer. Interacts with MYBBP1A; inhibits MYBBP1A transcriptional activation. Interacts with PRDM16, LPIN1 and PML. Interacts (via LXXLL motif) with RORA and RORC (via AF-2 motif); activates RORA and RORC transcriptional activation. Interacts with LRPPRC. Interacts with FOXO1. Interacts with NR5A2. Post-translationally, phosphorylation by AMPK in skeletal muscle increases activation of its own promoter. Phosphorylated by CLK2. Heavily acetylated by KAT2A/GCN5 under conditions of high nutrients, leading to inactivation of PPARGC1A. Deacetylated by SIRT1 in low nutrients/high NAD conditions, leading to its activation. In terms of processing, ubiquitinated. Ubiquitination by RNF34 induces proteasomal degradation. In terms of tissue distribution, heart, skeletal muscle, liver and kidney. Expressed at lower levels in brain and pancreas and at very low levels in the intestine and white adipose tissue. In skeletal muscle, levels were lower in obese than in lean subjects and fasting induced a 2-fold increase in levels in the skeletal muscle in obese subjects.

Its subcellular location is the nucleus. The protein resides in the PML body. It localises to the cytoplasm. Its function is as follows. Transcriptional coactivator for steroid receptors and nuclear receptors. Greatly increases the transcriptional activity of PPARG and thyroid hormone receptor on the uncoupling protein promoter. Can regulate key mitochondrial genes that contribute to the program of adaptive thermogenesis. Plays an essential role in metabolic reprogramming in response to dietary availability through coordination of the expression of a wide array of genes involved in glucose and fatty acid metabolism. Acts as a key regulator of gluconeogenesis: stimulates hepatic gluconeogenesis by increasing the expression of gluconeogenic enzymes, and acting together with FOXO1 to promote the fasting gluconeogenic program. Induces the expression of PERM1 in the skeletal muscle in an ESRRA-dependent manner. Also involved in the integration of the circadian rhythms and energy metabolism. Required for oscillatory expression of clock genes, such as BMAL1 and NR1D1, through the coactivation of RORA and RORC, and metabolic genes, such as PDK4 and PEPCK. In Homo sapiens (Human), this protein is Peroxisome proliferator-activated receptor gamma coactivator 1-alpha (PPARGC1A).